Here is a 177-residue protein sequence, read N- to C-terminus: Translationally-controlled tumor protein homolog (177 aa).

Positions 1-177 constitute a TCTP domain; it reads MIIYRDLFSG…IKQGLVVEKC (177 aa).

The protein belongs to the TCTP family.

The protein resides in the cytoplasm. Involved in calcium binding and microtubule stabilization. The sequence is that of Translationally-controlled tumor protein homolog from Trichinella pseudospiralis (Parasitic roundworm).